Consider the following 279-residue polypeptide: Movement protein (279 aa).

The protein belongs to the cucumovirus movement protein family.

The protein resides in the host cell junction. Its subcellular location is the host plasmodesma. In terms of biological role, transports viral genome to neighboring plant cells directly through plasmosdesmata, without any budding. The movement protein allows efficient cell to cell propagation, by bypassing the host cell wall barrier. Acts by forming a tubular structure at the host plasmodesmata, enlarging it enough to allow free passage of virion capsids. The sequence is that of Movement protein from Cucumber mosaic virus (strain Ixora) (CMV).